The primary structure comprises 281 residues: Ras-related protein Rab-40C (281 aa).

4 residues coordinate GTP: Ser-23, Gly-26, Lys-27, and Ser-46. Residues 41 to 49 (SPYAYSNGI) are switch-I. Positions 46 and 69 each coordinate Mg(2+). Gly-72, Asn-126, and Arg-127 together coordinate GTP. The interval 72-88 (GQGRFCTIFRSYSRGAQ) is switch-II. The SOCS box domain maps to 175-228 (LMRHGMEKIWRPNRVFSLQDLCCRAIVSCTPVHLIDKLPLPVTIKSHLKSFSMA). Residues 245–281 (SGAGGGGSKGNSLKRSKSIRPPQSPPQNCSRSNCKIS) form a disordered region. Residues 270–281 (PQNCSRSNCKIS) are compositionally biased toward polar residues. Cys-273 is lipidated: S-palmitoyl cysteine. A lipid anchor (S-geranylgeranyl cysteine) is attached at Cys-278.

The protein belongs to the small GTPase superfamily. Rab family. In terms of assembly, component of the cullin-5-RING E3 ubiquitin-protein ligase complex (ECS(RAB40C) complex) composed of CUL5, Elongin BC (ELOB and ELOC), RNF7/RBX2 and RAB40C. Interacts with protein phosphatase 6 (PP6) complex components ANKRD28, ANKRD52, PPP6C, PP6R1 and PP6R2; the interaction leads to ANKRD28 ubiquitination and decreased PP6 activity. Interacts with DAB2IP; DAB2IP acts as a GAP for RAB40C. Mg(2+) serves as cofactor.

It localises to the cell membrane. The protein localises to the cytoplasm. It is found in the cytosol. Its subcellular location is the golgi apparatus membrane. It carries out the reaction GTP + H2O = GDP + phosphate + H(+). It functions in the pathway protein modification; protein ubiquitination. Regulated by guanine nucleotide exchange factors (GEFs) which promote the exchange of bound GDP for free GTP. Regulated by GTPase activating proteins (GAPs) including DAB2IP, which increase the GTP hydrolysis activity. Inhibited by GDP dissociation inhibitors (GDIs). RAB40C small GTPase acts as substrate-recognition component of the ECS(RAB40C) E3 ubiquitin ligase complex which mediates the ubiquitination and subsequent proteasomal degradation of target proteins. The Rab40 subfamily belongs to the Rab family that are key regulators of intracellular membrane trafficking, from the formation of transport vesicles to their fusion with membranes. Rabs cycle between an inactive GDP-bound form and an active GTP-bound form that is able to recruit to membranes different sets of downstream effectors directly responsible for vesicle formation, movement, tethering and fusion. As part of the ECS(RAB40C) complex, mediates ANKRD28 ubiquitination and degradation, thereby inhibiting protein phosphatase 6 (PP6) complex activity and focal adhesion assembly during cell migration. Also negatively regulate lipid droplets accumulation in a GTP-dependent manner. In Homo sapiens (Human), this protein is Ras-related protein Rab-40C.